We begin with the raw amino-acid sequence, 128 residues long: Cytochrome c-type biogenesis protein CcmE (128 aa).

The Cytoplasmic segment spans residues 1 to 8 (MQKRVRNR). The helical; Signal-anchor for type II membrane protein transmembrane segment at 9–29 (LITIIICFCSACLGISIILYN) threads the bilayer. At 30–128 (LEKNIVFFLP…KHDENYRPPQ (99 aa)) the chain is on the extracellular side. Residues histidine 120 and tyrosine 124 each coordinate heme.

It belongs to the CcmE/CycJ family.

It localises to the cell membrane. Functionally, heme chaperone required for the biogenesis of c-type cytochromes. Transiently binds heme delivered by CcmC and transfers the heme to apo-cytochromes in a process facilitated by CcmF and CcmH. The chain is Cytochrome c-type biogenesis protein CcmE from Rickettsia africae (strain ESF-5).